Consider the following 323-residue polypeptide: Sphingolipid delta(4)-desaturase/C4-monooxygenase DES2 (323 aa).

Glycine 2 carries the N-myristoyl glycine lipid modification. 2 helical membrane-spanning segments follow: residues 45–65 and 68–88; these read WTVTAMVLAQLLACWLAQGLA and WLFFWAYAFGGCVNHSLTLAI. The short motif at 89–93 is the Histidine box-1 element; the sequence is HDISH. The segment at 95–99 is required for C4-hydroxylase activity; the sequence is TAFGT. The short motif at 128-132 is the Histidine box-2 element; sequence HVDHH. The chain crosses the membrane as a helical span at residues 209-231; that stretch reads MVYLLASSLLGLGLHPISGHFVA. A Histidine box-3 motif is present at residues 259 to 263; that stretch reads HMEHH.

Belongs to the fatty acid desaturase type 1 family. DEGS subfamily.

It is found in the endoplasmic reticulum membrane. The enzyme catalyses a dihydroceramide + 2 Fe(II)-[cytochrome b5] + O2 + 2 H(+) = a phytoceramide + 2 Fe(III)-[cytochrome b5] + H2O. The catalysed reaction is an N-acylsphinganine + 2 Fe(II)-[cytochrome b5] + O2 + 2 H(+) = an N-acylsphing-4-enine + 2 Fe(III)-[cytochrome b5] + 2 H2O. It catalyses the reaction N-octanoylsphinganine + 2 Fe(II)-[cytochrome b5] + O2 + 2 H(+) = N-octanoyl-4-hydroxysphinganine + 2 Fe(III)-[cytochrome b5] + H2O. It carries out the reaction an N-acylsphinganine + 2 Fe(II)-[cytochrome b5] + O2 + 2 H(+) = an N-acyl-(4R)-4-hydroxysphinganine + 2 Fe(III)-[cytochrome b5] + H2O. The protein operates within membrane lipid metabolism; sphingolipid biosynthesis. Functionally, bifunctional enzyme which acts both as a sphingolipid delta(4)-desaturase and a sphingolipid C4-monooxygenase. The chain is Sphingolipid delta(4)-desaturase/C4-monooxygenase DES2 from Bos taurus (Bovine).